The following is a 597-amino-acid chain: Aspartate--tRNA ligase (597 aa).

Glu180 contributes to the L-aspartate binding site. An aspartate region spans residues 204–207 (QLFK). Residue Arg226 coordinates L-aspartate. ATP-binding positions include 226 to 228 (RDE) and Gln235. His454 is an L-aspartate binding site. An ATP-binding site is contributed by Glu488. Residue Arg495 participates in L-aspartate binding. 540-543 (GLDR) is a binding site for ATP.

This sequence belongs to the class-II aminoacyl-tRNA synthetase family. Type 1 subfamily. In terms of assembly, homodimer.

Its subcellular location is the cytoplasm. It catalyses the reaction tRNA(Asp) + L-aspartate + ATP = L-aspartyl-tRNA(Asp) + AMP + diphosphate. Catalyzes the attachment of L-aspartate to tRNA(Asp) in a two-step reaction: L-aspartate is first activated by ATP to form Asp-AMP and then transferred to the acceptor end of tRNA(Asp). The protein is Aspartate--tRNA ligase of Clostridium perfringens (strain ATCC 13124 / DSM 756 / JCM 1290 / NCIMB 6125 / NCTC 8237 / Type A).